The primary structure comprises 217 residues: MSGLSESAKLVKEALEQRGLETPMRPNNVSREEKKEKIEHHMREILGLLQLDLTDDSLEETPHRIAKMYVDEIFSGLDYSNFPKITVIENKMNVSEMVRVKDITVTSTCEHHLVTIDGKAAVAYIPRGKIIGLSKINRIVRFFAQRPQVQERMTQQILVALQTLLESDDVAVTIDATHYCVKSRGVMDATSETTTTALGGIFKSNPATRAEFLHGLR.

Zn(2+)-binding residues include cysteine 109, histidine 112, and cysteine 180.

Belongs to the GTP cyclohydrolase I family. In terms of assembly, toroid-shaped homodecamer, composed of two pentamers of five dimers.

It catalyses the reaction GTP + H2O = 7,8-dihydroneopterin 3'-triphosphate + formate + H(+). The protein operates within cofactor biosynthesis; 7,8-dihydroneopterin triphosphate biosynthesis; 7,8-dihydroneopterin triphosphate from GTP: step 1/1. The protein is GTP cyclohydrolase 1 of Vibrio campbellii (strain ATCC BAA-1116).